The primary structure comprises 272 residues: Anamorsin homolog (272 aa).

The segment at 1 to 156 (MDSMMNQKTV…KIGSSFALKK (156 aa)) is N-terminal SAM-like domain. Residues 157 to 185 (PVTNLFKIDLDDDVDLIDEDSLLTEEDLM) form a linker region. 4 residues coordinate [2Fe-2S] cluster: Cys195, Cys202, Cys205, and Cys207. A fe-S binding site A region spans residues 195-207 (CETTKKACKNCVC). [4Fe-4S] cluster contacts are provided by Cys233, Cys236, Cys244, and Cys247. 2 short sequence motifs (cx2C motif) span residues 233-236 (CGSC) and 244-247 (CGTC). Residues 233 to 247 (CGSCGLGDAFRCGTC) form a fe-S binding site B region.

It belongs to the anamorsin family. In terms of assembly, monomer. Interacts with ATR3. [2Fe-2S] cluster is required as a cofactor. The cofactor is [4Fe-4S] cluster.

It is found in the cytoplasm. The protein resides in the mitochondrion intermembrane space. Its function is as follows. Component of the cytosolic iron-sulfur (Fe-S) protein assembly (CIA) machinery. Required for the maturation of extramitochondrial Fe-S proteins. Part of an electron transfer chain functioning in an early step of cytosolic Fe-S biogenesis, facilitating the de novo assembly of a [4Fe-4S] cluster on the cytosolic Fe-S scaffold complex. Electrons are transferred from NADPH via FAD- and FMN-containing diflavin oxidoreductase TAH18/ATR3. Together with the diflavin oxidoreductase, also required for the assembly of the diferric tyrosyl radical cofactor of ribonucleotide reductase (RNR), probably by providing electrons for reduction during radical cofactor maturation in the catalytic small subunit. Required for embryo development. In Arabidopsis thaliana (Mouse-ear cress), this protein is Anamorsin homolog.